The sequence spans 147 residues: uncharacterized protein (147 aa).

This is an uncharacterized protein from Gallid herpesvirus 2 (strain Chicken/Md5/ATCC VR-987) (GaHV-2).